A 919-amino-acid chain; its full sequence is Eukaryotic translation initiation factor 3 subunit C (919 aa).

Positions 1 to 28 (MSRFFANGSDSESESSEEEVQAPNFNKA) are disordered. Over residues 11 to 20 (SESESSEEEV) the composition is skewed to acidic residues. 3 positions are modified to phosphoserine: serine 34, serine 165, and serine 177. Residues 154 to 275 (LSRFRENPQE…EQKIKLRKRA (122 aa)) are disordered. Residues 162–171 (QEESENEDEE) are compositionally biased toward acidic residues. A compositionally biased stretch (acidic residues) spans 210 to 236 (ADDEDSDESIDWDPDTESETESSEDEN). Over residues 241-269 (MRERFLKRSTEKDDKDDDKRKDKRKEQKI) the composition is skewed to basic and acidic residues. The PCI domain maps to 640 to 816 (FHMHINLELL…ETVVMHRSEP (177 aa)). The disordered stretch occupies residues 848 to 919 (FFQRGNMGNR…QQQVQTIDEE (72 aa)). Positions 883–894 (QRNRNQRGHHKN) are enriched in basic residues. Positions 895-919 (QQNQNQQQQQQHQREQQQVQTIDEE) are enriched in low complexity.

This sequence belongs to the eIF-3 subunit C family. In terms of assembly, component of the eukaryotic translation initiation factor 3 (eIF-3) complex. The eIF-3 complex interacts with pix.

The protein resides in the cytoplasm. In terms of biological role, component of the eukaryotic translation initiation factor 3 (eIF-3) complex, which is involved in protein synthesis of a specialized repertoire of mRNAs and, together with other initiation factors, stimulates binding of mRNA and methionyl-tRNAi to the 40S ribosome. The eIF-3 complex specifically targets and initiates translation of a subset of mRNAs involved in cell proliferation. This Drosophila willistoni (Fruit fly) protein is Eukaryotic translation initiation factor 3 subunit C.